A 238-amino-acid chain; its full sequence is MDYEKFLLFGDSITEFAFNTRPIEDGKDQYALGAALVNEYTRKMDILQRGFKGYTSRWALKILPEILKHESNIVMATIFLGANDACSAGPQSVPLPEFIDNIRQMVSLMKSYHIRPIIIGPGLVDREKWEKEKSEEIALGYFRTNENFAIYSDALAKLANEEKVPFVALNKAFQQEGGDAWQQLLTDGLHFSGKGYKIFHDELLKVIETFYPQYHPKNMQYKLKDWRDVLDDGSNIMS.

Catalysis depends on Ser12, which acts as the Nucleophile. Asp187 serves as the catalytic Proton donor. The Proton acceptor role is filled by His190.

This sequence belongs to the 'GDSL' lipolytic enzyme family. IAH1 subfamily. Homodimer.

It carries out the reaction 3-methylbutyl acetate + H2O = 3-methylbutanol + acetate + H(+). Its function is as follows. Plays a crucial role in the hydrolysis of isoamyl acetate in sake mash. Hydrolyzes short chain esters from acetate (C2) to hexanoate (C6), showing more specificity for shorter chain exters. No activity for decanoate (C10) esters. This is Isoamyl acetate-hydrolyzing esterase from Saccharomyces cerevisiae (strain ATCC 204508 / S288c) (Baker's yeast).